The sequence spans 218 residues: N-alpha-acetyltransferase 11 (218 aa).

An interaction with NAA15 region spans residues 1-58 (MNIRNARPDDLMNMQHCNLLCLPENYQMKYYFYHGLSWPQLSYIAEDEDGKIVGYVLA). The N-acetyltransferase domain maps to 1–152 (MNIRNARPDD…DAYAMKRDLS (152 aa)). The tract at residues 175–218 (EETQGGTLPDAGEACLPKNPTSKDSGSSDSTDVQDSSEDLDSIS) is disordered. Over residues 196–205 (SKDSGSSDST) the composition is skewed to low complexity. A compositionally biased stretch (acidic residues) spans 209–218 (DSSEDLDSIS).

Belongs to the acetyltransferase family. ARD1 subfamily. In terms of assembly, component of the N-terminal acetyltransferase A (NatA) complex composed of NAA11 and NAA15. Interacts with HIF1A.

It is found in the cytoplasm. Its subcellular location is the nucleus. It carries out the reaction N-terminal glycyl-[protein] + acetyl-CoA = N-terminal N(alpha)-acetylglycyl-[protein] + CoA + H(+). The catalysed reaction is N-terminal L-alanyl-[protein] + acetyl-CoA = N-terminal N(alpha)-acetyl-L-alanyl-[protein] + CoA + H(+). The enzyme catalyses N-terminal L-seryl-[protein] + acetyl-CoA = N-terminal N(alpha)-acetyl-L-seryl-[protein] + CoA + H(+). It catalyses the reaction N-terminal L-valyl-[protein] + acetyl-CoA = N-terminal N(alpha)-acetyl-L-valyl-[protein] + CoA + H(+). It carries out the reaction N-terminal L-cysteinyl-[protein] + acetyl-CoA = N-terminal N(alpha)-acetyl-L-cysteinyl-[protein] + CoA + H(+). The catalysed reaction is N-terminal L-threonyl-[protein] + acetyl-CoA = N-terminal N(alpha)-acetyl-L-threonyl-[protein] + CoA + H(+). In terms of biological role, displays alpha (N-terminal) acetyltransferase activity. Proposed alternative catalytic subunit of the N-terminal acetyltransferase A (NatA) complex. This is N-alpha-acetyltransferase 11 (Naa11) from Mus musculus (Mouse).